Consider the following 93-residue polypeptide: DNA-directed RNA polymerase subunit omega (93 aa).

The protein belongs to the RNA polymerase subunit omega family. The RNAP catalytic core consists of 2 alpha, 1 beta, 1 beta' and 1 omega subunit. When a sigma factor is associated with the core the holoenzyme is formed, which can initiate transcription.

It catalyses the reaction RNA(n) + a ribonucleoside 5'-triphosphate = RNA(n+1) + diphosphate. Promotes RNA polymerase assembly. Latches the N- and C-terminal regions of the beta' subunit thereby facilitating its interaction with the beta and alpha subunits. The polypeptide is DNA-directed RNA polymerase subunit omega (Shewanella piezotolerans (strain WP3 / JCM 13877)).